Here is a 331-residue protein sequence, read N- to C-terminus: Probable allantoicase (331 aa).

It belongs to the allantoicase family.

It catalyses the reaction allantoate + H2O = (S)-ureidoglycolate + urea. Its pathway is nitrogen metabolism; (S)-allantoin degradation; (S)-ureidoglycolate from allantoate (aminidohydrolase route): step 1/1. This Pseudomonas syringae pv. tomato (strain ATCC BAA-871 / DC3000) protein is Probable allantoicase.